The chain runs to 377 residues: Probable G-protein coupled receptor F27E5.8 (377 aa).

Residues 1–34 are Extracellular-facing; it reads MSEQDSSSPKYMRFLLGNFTSAEMVTDGNFLIYC. Asn18 carries N-linked (GlcNAc...) asparagine glycosylation. The chain crosses the membrane as a helical span at residues 35–55; the sequence is IEMGLLVIGVLENIFMIGAVF. Residues 56–71 lie on the Cytoplasmic side of the membrane; it reads STSCLHLNLRILICNC. Residues 72-92 form a helical membrane-spanning segment; sequence CLGFILMAVGRAMIAVPLCIA. Topologically, residues 93–105 are extracellular; that stretch reads HLRDVDISSHAWC. Residues 106-126 form a helical membrane-spanning segment; the sequence is FIANAVHHSSADSVCLSFVFI. The Cytoplasmic segment spans residues 127–144; it reads MLERTAGTIWSKDYEKTK. A helical transmembrane segment spans residues 145–165; it reads IHIFPCIFAFLQWFIPMFMIL. Topologically, residues 166–195 are extracellular; that stretch reads GNFLDRANRMEHFLLYPHLPCQIEYLTPTM. A helical transmembrane segment spans residues 196–216; it reads FMITIFIIVIGFIASVGGITI. At 217 to 251 the chain is on the cytoplasmic side; the sequence is VYNKNIKKYNTRDIWFNTVNLSERYQITENIRSTH. A helical transmembrane segment spans residues 252-272; it reads LLFPLLALMLIFSTLSVSVLI. Residues 273–303 are Extracellular-facing; the sequence is YGGYWVSVMTKEPARFEEVVKWFGRGGEAAQ. Residues 304 to 324 traverse the membrane as a helical segment; sequence LFDIITAIYTISFPICAFICH. Topologically, residues 325–377 are cytoplasmic; that stretch reads PNLFRFLRKFIGWNSYAVRPSNLNEIGGFEMSTAPIRTQTEFHFQELSRQWNT.

The protein belongs to the G-protein coupled receptor 1 family.

It is found in the cell membrane. The polypeptide is Probable G-protein coupled receptor F27E5.8 (Caenorhabditis elegans).